The sequence spans 2122 residues: Pecanex-like protein 2 (2122 aa).

The next 2 membrane-spanning stretches (helical) occupy residues 36–53 (LYLWLFLLLLPLALHLAF) and 60–82 (ALFYCGSVTIFFAVIKLISYRLH). Disordered stretches follow at residues 92–164 (QHRS…ELPA) and 180–250 (QPEA…LVNP). Composition is skewed to polar residues over residues 146 to 157 (SRGQSVHSQHSS) and 185 to 203 (ASSTSPGMKSESLPASQGR). An N-linked (GlcNAc...) asparagine glycan is attached at asparagine 288. 2 stretches are compositionally biased toward low complexity: residues 392–407 (VTSSDRTSVRSSAESA) and 458–476 (PDRCSGSGPGDGSPTPGST). Disordered stretches follow at residues 392 to 556 (VTSS…QIPN) and 575 to 634 (VVAP…PVFT). Residues 528–538 (STKEVVSDGEK) are compositionally biased toward basic and acidic residues. Asparagine 556 carries an N-linked (GlcNAc...) asparagine glycan. Residues 599–618 (TKEEAVENEKPNGRDPKPGK) show a composition bias toward basic and acidic residues. A compositionally biased stretch (polar residues) spans 625-634 (DPANGSPVFT). 13 helical membrane-spanning segments follow: residues 825-845 (VAVLLSVLVSLLGFLTLNRGF), 849-869 (LWVLLFCLVMASCQYSLLKSV), 882-902 (QIIAYSRPIYFCMLCSLILLL), 933-953 (HLIVFLCCFPAISLLGLFPQI), 976-998 (GITSAVYSVGRSVLAAALLHAFC), 1010-1030 (HIPALFSAFCGLLVALSYHLS), 1080-1100 (LVICSAAAVLSFAVSASTVFL), 1105-1125 (FLSIVLFALAGTVGLITHHLL), 1174-1194 (YLLYPAIVLNALTLDAFSISN), 1218-1238 (SFCNPVHQFANLGFTVIFFHF), 1245-1265 (ESFLLDFFMVSIVFTKLGDLL), 1270-1290 (FVLAYVAPWQMAWGSSFHVFA), and 1305-1325 (TFATSIFSTPLSPFLGSVIFI). N-linked (GlcNAc...) asparagine glycans are attached at residues asparagine 1393, asparagine 1534, and asparagine 1802. Disordered regions lie at residues 1858–1943 (SVGQ…SSGP) and 1955–1991 (STSVHELAQRPSGSRLSLHTSAASLHSQPPPVTTTGH). Residues 1888-1898 (ESRDGSTEQPR) show a composition bias toward basic and acidic residues. Polar residues predominate over residues 1922–1942 (SQSVQAHSAISQRPPTLSSSG). The span at 1968-1981 (SRLSLHTSAASLHS) shows a compositional bias: low complexity. Asparagine 2039 carries N-linked (GlcNAc...) asparagine glycosylation. Positions 2097 to 2122 (VLCRRASQEDMGLDDTASQQSTSDEQ) are disordered. Positions 2112-2122 (TASQQSTSDEQ) are enriched in polar residues.

Belongs to the pecanex family.

The protein localises to the membrane. Its function is as follows. May play a role in tumorigenesis. This Mus musculus (Mouse) protein is Pecanex-like protein 2.